The following is a 20-amino-acid chain: Agglutinin beta-2 chain isoform 1 (20 aa).

A compositionally biased stretch (polar residues) spans 1 to 10; sequence TQSTGTSQTI. Residues 1–20 are disordered; that stretch reads TQSTGTSQTIAVGLWGGPDN.

The protein belongs to the jacalin lectin family. Tetramer of four alpha chains associated with two or four beta chains.

In terms of biological role, alpha-methyl-D-mannoside and D-mannose specific lectin. Binds IgA. This Morus nigra (Black mulberry) protein is Agglutinin beta-2 chain isoform 1.